The primary structure comprises 601 residues: Kelch repeat and BTB domain-containing protein 8 (601 aa).

Positions 1–25 (MAASADLSKSSPTPNGIPSSDPASD) are disordered. The span at 7–22 (LSKSSPTPNGIPSSDP) shows a compositional bias: polar residues. The BTB domain maps to 49 to 117 (TDIVVEVDHG…AYTSRVILTE (69 aa)). One can recognise a BACK domain in the interval 153–252 (IGVFIFADHY…PLMEDTFIEK (100 aa)). Kelch repeat units follow at residues 336-390 (DIYI…YCCG), 391-441 (KMYA…EYKE), 443-481 (IYVLQGEFFLFYEPQKDYWGFLTPMTVPRIQGLAAVYKD), 483-532 (IYYI…LFQN), and 542-588 (QVTV…FECA).

The protein belongs to the KBTBD8 family. In terms of assembly, component of the BCR(KBTBD8) E3 ubiquitin ligase complex, at least composed of CUL3, KBTBD8 and RBX1.

Its subcellular location is the cytoplasm. It localises to the cytoskeleton. The protein resides in the spindle. It is found in the golgi apparatus. In terms of biological role, substrate-specific adapter of a BCR (BTB-CUL3-RBX1) E3 ubiquitin ligase complex that acts as a regulator of neural crest specification. The BCR(KBTBD8) complex acts by mediating monoubiquitination of NOLC1 and TCOF1: monoubiquitination promotes the formation of a NOLC1-TCOF1 complex that acts as a platform to connect RNA polymerase I with enzymes responsible for ribosomal processing and modification, leading to remodel the translational program of differentiating cells in favor of neural crest specification. The protein is Kelch repeat and BTB domain-containing protein 8 (KBTBD8) of Homo sapiens (Human).